Here is a 284-residue protein sequence, read N- to C-terminus: Bifunctional protein FolD (284 aa).

NADP(+)-binding positions include 166–168 (GAS) and isoleucine 232.

Belongs to the tetrahydrofolate dehydrogenase/cyclohydrolase family. Homodimer.

It catalyses the reaction (6R)-5,10-methylene-5,6,7,8-tetrahydrofolate + NADP(+) = (6R)-5,10-methenyltetrahydrofolate + NADPH. The catalysed reaction is (6R)-5,10-methenyltetrahydrofolate + H2O = (6R)-10-formyltetrahydrofolate + H(+). The protein operates within one-carbon metabolism; tetrahydrofolate interconversion. Its function is as follows. Catalyzes the oxidation of 5,10-methylenetetrahydrofolate to 5,10-methenyltetrahydrofolate and then the hydrolysis of 5,10-methenyltetrahydrofolate to 10-formyltetrahydrofolate. The protein is Bifunctional protein FolD of Pseudomonas aeruginosa (strain LESB58).